Here is a 338-residue protein sequence, read N- to C-terminus: Aspartate carbamoyltransferase catalytic subunit (338 aa).

Carbamoyl phosphate is bound by residues R72 and T73. K100 is a binding site for L-aspartate. Carbamoyl phosphate is bound by residues R122, H152, and Q155. The L-aspartate site is built by R186 and R243. Carbamoyl phosphate-binding residues include G284 and P285.

This sequence belongs to the aspartate/ornithine carbamoyltransferase superfamily. ATCase family. In terms of assembly, heterododecamer (2C3:3R2) of six catalytic PyrB chains organized as two trimers (C3), and six regulatory PyrI chains organized as three dimers (R2).

It carries out the reaction carbamoyl phosphate + L-aspartate = N-carbamoyl-L-aspartate + phosphate + H(+). Its pathway is pyrimidine metabolism; UMP biosynthesis via de novo pathway; (S)-dihydroorotate from bicarbonate: step 2/3. Functionally, catalyzes the condensation of carbamoyl phosphate and aspartate to form carbamoyl aspartate and inorganic phosphate, the committed step in the de novo pyrimidine nucleotide biosynthesis pathway. The sequence is that of Aspartate carbamoyltransferase catalytic subunit from Acinetobacter baylyi (strain ATCC 33305 / BD413 / ADP1).